Consider the following 1289-residue polypeptide: MAEIKREFRAEDGLDAGGDKIINVALADRTVGTDGVNVDYLIQENTVQQYDPTRGYLKDFVIIYDNRFWAAINDIPKPAGAFNSGRWRALRTDANWITVSSGSYQLKSGEAISVNTAAGNDITFTLPSSPIDGDTIVLQDIGGKPGVNQVLIVAPVQSIVNFRGEQVRSVLMTHPKSQLVLIFSNRLWQMYVADYSREAIVVTPANTYQAQSNDFIVRRFTSAAPINVKLPRFANHGDIINFVDLDKLNPLYHTIVTTYDETTSVQEVGTHSIEGRTSIDGFLMFDDNEKLWRLFDGDSKARLRIITTNSNIRPNEEVMVFGANNGTTQTIELKLPTNISVGDTVKISMNYMRKGQTVKIKAADEDKIASSVQLLQFPKRSEYPPEAEWVTVQELVFNDETNYVPVLELAYIEDSDGKYWVVQQNVPTVERVDSLNDSTRARLGVIALATQAQANVDLENSPQKELAITPETLANRTATETRRGIARIATTAQVNQNTTFSFADDIIITPKKLNERTATETRRGVAEIATQQETNAGTDDTTIITPKKLQARQGSESLSGIVTFVSTAGATPASSRELNGTNVYNKNTDNLVVSPKALDQYKATPTQQGAVILAVESEVIAGQSQQGWANAVVTPETLHKKTSTDGRIGLIEIATQSEVNTGTDYTRAVTPKTLNDRRATESLSGIAEIATQVEFDAGVDDTRISTPLKIKTRFNSTDRTSVVALSGLVESGTLWDHYTLNILEANETQRGTLRVATQVEAAAGTLDNVLITPKKLLGTKSTEAQEGVIKVATQSETVTGTSANTAVSPKNLKWIAQSEPTWAATTAIRGFVKTSSGSITFVGNDTVGSTQDLELYEKNSYAVSPYELNRVLANYLPLKAKAADTNLLDGLDSSQFIRRDIAQTVNGSLTLTQQTNLSAPLVSSSTGEFGGSLAANRTFTIRNTGAPTSIVFEKGPASGANPAQSMSIRVWGNQFGGGSDTTRSTVFEVGDDTSHHFYSQRNKDGNIAFNINGTVMPININASGLMNVNGTATFGRSVTANGEFISKSANAFRAINGDYGFFIRNDASNTYFLLTAAGDQTGGFNGLRPLLINNQSGQITIGEGLIIAKGVTINSGGLTVNSRIRSQGTKTSDLYTRAPTSDTVGFWSIDINDSATYNQFPGYFKMVEKTNEVTGLPYLERGEEVKSPGTLTQFGNTLDSLYQDWITYPTTPEARTTRWTRTWQKTKNSWSSFVQVFDGGNPPQPSDIGALPSDNATMGNLTIRDFLRIGNVRIVPDPVNKTVKFEWVE.

Belongs to the tevenvirinae long-tail fiber proximal subunit protein family. The long-tail fibers are trimeric, with a stoichiometry of gp34/gp37/gp36/gp35 of 3:3:3:1.

Its subcellular location is the virion. Structural component of the proximal-half of the long-tail fiber. The long-tail fibers of T4 are about 1600 Angstroms long with a kink in the middle that divides the fiber into proximal and distal halves. The chain is Long-tail fiber proximal subunit (34) from Escherichia coli (Bacteriophage T4).